We begin with the raw amino-acid sequence, 430 residues long: Dihydroorotase (430 aa).

Residues histidine 61 and histidine 63 each contribute to the Zn(2+) site. Substrate is bound by residues 63-65 and asparagine 95; that span reads HLR. Positions 153, 180, and 233 each coordinate Zn(2+). Asparagine 279 is a substrate binding site. Residue aspartate 306 participates in Zn(2+) binding. Aspartate 306 is a catalytic residue. Residues histidine 310 and 324 to 325 contribute to the substrate site; that span reads FG.

It belongs to the metallo-dependent hydrolases superfamily. DHOase family. Class I DHOase subfamily. Requires Zn(2+) as cofactor.

It carries out the reaction (S)-dihydroorotate + H2O = N-carbamoyl-L-aspartate + H(+). It functions in the pathway pyrimidine metabolism; UMP biosynthesis via de novo pathway; (S)-dihydroorotate from bicarbonate: step 3/3. In terms of biological role, catalyzes the reversible cyclization of carbamoyl aspartate to dihydroorotate. This Lactiplantibacillus plantarum (strain ATCC BAA-793 / NCIMB 8826 / WCFS1) (Lactobacillus plantarum) protein is Dihydroorotase.